The following is a 294-amino-acid chain: Phosphoprotein (294 aa).

The segment at 12–28 (MGNEAAKAAEAFQRSLK) is binding to monomeric RNA-free nucleoprotein. The segment at 52-97 (KPTISKSTKVTTPPERRNAWGEKPDTTRNQTEEARNEATLEDTSRL) is disordered. Over residues 65–97 (PERRNAWGEKPDTTRNQTEEARNEATLEDTSRL) the composition is skewed to basic and acidic residues. The residue at position 106 (serine 106) is a Phosphoserine. The binding to host phosphatase PP1 stretch occupies residues 123 to 128 (KKKVTF). Positions 135–157 (RYTKLEMEALELLSDNEDDDAES) are binding to protein M2-1. A phosphoserine mark is found at serine 148, serine 157, serine 158, serine 168, and serine 171. The oligomerization and binding to RNA-directed RNA polymerase L stretch occupies residues 169–194 (ALSLEARLESIDEKLSMILGLLRTLN). Residues 234 to 294 (MKEEAKQKSK…PDDDLYSLTM (61 aa)) are disordered. The segment at 251–279 (LTEKAKELNKIVEDESTSGESEEEEEEED) is binding to RNA-directed RNA polymerase L. Residues 253–263 (EKAKELNKIVE) are compositionally biased toward basic and acidic residues. Acidic residues predominate over residues 264 to 294 (DESTSGESEEEEEEEDEEESNPDDDLYSLTM). Residues 281-294 (EESNPDDDLYSLTM) form a binding to the N-RNA complex region.

The protein belongs to the pneumoviridae phosphoprotein P family. As to quaternary structure, homotetramer. Interacts with protein M2-1; the interaction between the two tetramers is required for the anti-termination and elongation transcriptional activities of protein M2-1. Interacts with host phosphatase PP1; this interaction recruits PP1 to the inclusion bodies. Formation of a complex PP1/M2-1/P allows P to target host PP1 phosphatase to the M2-1 substrate. Interacts with the nucleoprotein N; the phosphorylated phosphoprotein P binds to N-RNA complex. Interacts with the monomeric RNA-free nucleoprotein N. Interacts with RNA-directed RNA polymerase L (via N-terminus); the association of P and L forms the polymerase complex. Constitutively phosphorylated by host.

The protein localises to the virion. The protein resides in the host cytoplasm. Its function is as follows. Plays critical roles in regulating RNA replication and transcription through its interactions with multiple proteins. Tethers the RNA-directed RNA polymerase L to the nucleoprotein-RNA complex. Recruits the M2-1 protein, a processivity factor that is required for efficient transcription of viral RNA. Acts as a chaperone for neo-synthesized nucleoprotein by forming an N-P complex that preserves N in a monomeric and RNA-free state and prevents the association of nascent N with host cell RNAs. Recruits the host phosphatase PP1 to inclusion bodies to regulate viral transcription. The protein is Phosphoprotein of Avian metapneumovirus (isolate Canada goose/Minnesota/15a/2001) (AMPV).